Reading from the N-terminus, the 66-residue chain is Photosystem II reaction center protein J (66 aa).

Residues 1–23 (MSGNKSPFPDGRIPDRLPDGRPA) form a disordered region. A helical membrane pass occupies residues 37 to 57 (LWLVATAGGMAVLFVVGLFFY).

It belongs to the PsbJ family. In terms of assembly, PSII is composed of 1 copy each of membrane proteins PsbA, PsbB, PsbC, PsbD, PsbE, PsbF, PsbH, PsbI, PsbJ, PsbK, PsbL, PsbM, PsbT, PsbX, PsbY, PsbZ, Psb30/Ycf12, peripheral proteins PsbO, CyanoQ (PsbQ), PsbU, PsbV and a large number of cofactors. It forms dimeric complexes.

It is found in the cellular thylakoid membrane. One of the components of the core complex of photosystem II (PSII). PSII is a light-driven water:plastoquinone oxidoreductase that uses light energy to abstract electrons from H(2)O, generating O(2) and a proton gradient subsequently used for ATP formation. It consists of a core antenna complex that captures photons, and an electron transfer chain that converts photonic excitation into a charge separation. In Parasynechococcus marenigrum (strain WH8102), this protein is Photosystem II reaction center protein J.